A 387-amino-acid polypeptide reads, in one-letter code: Acetate kinase (387 aa).

N14 provides a ligand contact to Mg(2+). K21 contributes to the ATP binding site. R80 contacts substrate. D137 functions as the Proton donor/acceptor in the catalytic mechanism. ATP is bound by residues 197-201, 271-273, and 319-323; these read HLGNG, DFR, and GIGEN. Position 373 (E373) interacts with Mg(2+).

This sequence belongs to the acetokinase family. Homodimer. It depends on Mg(2+) as a cofactor. Mn(2+) serves as cofactor.

It localises to the cytoplasm. The catalysed reaction is acetate + ATP = acetyl phosphate + ADP. It functions in the pathway metabolic intermediate biosynthesis; acetyl-CoA biosynthesis; acetyl-CoA from acetate: step 1/2. In terms of biological role, catalyzes the formation of acetyl phosphate from acetate and ATP. Can also catalyze the reverse reaction. The sequence is that of Acetate kinase from Mycobacterium avium (strain 104).